We begin with the raw amino-acid sequence, 156 residues long: Small ribosomal subunit protein uS7 (156 aa).

Belongs to the universal ribosomal protein uS7 family. As to quaternary structure, part of the 30S ribosomal subunit. Contacts proteins S9 and S11.

Functionally, one of the primary rRNA binding proteins, it binds directly to 16S rRNA where it nucleates assembly of the head domain of the 30S subunit. Is located at the subunit interface close to the decoding center, probably blocks exit of the E-site tRNA. This is Small ribosomal subunit protein uS7 from Mycobacterium sp. (strain JLS).